We begin with the raw amino-acid sequence, 237 residues long: N-(5'-phosphoribosyl)anthranilate isomerase (237 aa).

Belongs to the TrpF family.

It carries out the reaction N-(5-phospho-beta-D-ribosyl)anthranilate = 1-(2-carboxyphenylamino)-1-deoxy-D-ribulose 5-phosphate. It participates in amino-acid biosynthesis; L-tryptophan biosynthesis; L-tryptophan from chorismate: step 3/5. The protein is N-(5'-phosphoribosyl)anthranilate isomerase of Desulfitobacterium hafniense (strain DSM 10664 / DCB-2).